The primary structure comprises 190 residues: Dual specificity protein phosphatase 21 (190 aa).

In terms of domain architecture, Tyrosine-protein phosphatase spans 21–162 (SFSQITRSLF…LINYEFKLFN (142 aa)). The sufficient for mitochondrial localization stretch occupies residues 43–128 (LSSNRITAIV…AYLMKYHSMS (86 aa)). Catalysis depends on Cys-106, which acts as the Phosphocysteine intermediate.

The protein belongs to the protein-tyrosine phosphatase family. Non-receptor class dual specificity subfamily. Microtubule inner protein component of sperm flagellar doublet microtubules. Expressed in testis.

The protein localises to the cytoplasm. It localises to the nucleus. The protein resides in the mitochondrion inner membrane. It is found in the cytoskeleton. Its subcellular location is the flagellum axoneme. The catalysed reaction is O-phospho-L-tyrosyl-[protein] + H2O = L-tyrosyl-[protein] + phosphate. The enzyme catalyses O-phospho-L-seryl-[protein] + H2O = L-seryl-[protein] + phosphate. It catalyses the reaction O-phospho-L-threonyl-[protein] + H2O = L-threonyl-[protein] + phosphate. Protein phosphatase component of the sperm flagellar doublet microtubules. May act as a regulator of sperm motility by mediating dephosphorylation of sperm doublet microtubule proteins. Can dephosphorylate single and diphosphorylated synthetic MAPK peptides, with preference for the phosphotyrosine and diphosphorylated forms over phosphothreonine. The chain is Dual specificity protein phosphatase 21 (DUSP21) from Homo sapiens (Human).